The chain runs to 504 residues: Maturase K (504 aa).

It belongs to the intron maturase 2 family. MatK subfamily.

It localises to the plastid. The protein localises to the chloroplast. In terms of biological role, usually encoded in the trnK tRNA gene intron. Probably assists in splicing its own and other chloroplast group II introns. The chain is Maturase K from Matthiola incana (Common stock).